Consider the following 342-residue polypeptide: Heat-inducible transcription repressor HrcA (342 aa).

It belongs to the HrcA family.

Its function is as follows. Negative regulator of class I heat shock genes (grpE-dnaK-dnaJ and groELS operons). Prevents heat-shock induction of these operons. This chain is Heat-inducible transcription repressor HrcA, found in Leptospira interrogans serogroup Icterohaemorrhagiae serovar copenhageni (strain Fiocruz L1-130).